Consider the following 417-residue polypeptide: MARASSSSSPPSPRLLLLLLVAVAATLLPEAAALGNFTAESRGARWRSRRARRRAFENGLGRTPQMGWNSWNHFYCGINEQIIRETADALVNTGLAKLGYQYVNIDDCWAEYSRDSQGNFVPNRQTFPSGIKALADYVHAKGLKLGIYSDAGSQTCSNKMPGSLDHEEQDVKTFASWGVDYLKYDNCNDAGRSVMERYTRMSNAMKTYGKNIFFSLCEWGKENPATWAGRMGNSWRTTGDIADNWGSMTSRADENDQWAAYAGPGGWNDPDMLEVGNGGMSEAEYRSHFSIWALAKAPLLIGCDVRSMSQQTKNILSNSEVIAVNQDSLGVQGKKVQSDNGLEVWAGPLSNNRKAVVLWNRQSYQATITAHWSNIGLAGSVAVTARDLWAHSSFAAQGQISASVAPHDCKMYVLTPN.

The first 55 residues, 1–55 (MARASSSSSPPSPRLLLLLLVAVAATLLPEAAALGNFTAESRGARWRSRRARRRA), serve as a signal peptide directing secretion. The alpha-D-galactose site is built by Trp-71, Asp-106, Asp-107, Cys-156, Lys-183, Asp-185, Trp-219, Arg-236, and Asp-240. Cystine bridges form between Cys-76–Cys-108 and Cys-156–Cys-187. The Nucleophile role is filled by Asp-185. The active-site Proton donor is the Asp-240.

It belongs to the glycosyl hydrolase 27 family.

The enzyme catalyses Hydrolysis of terminal, non-reducing alpha-D-galactose residues in alpha-D-galactosides, including galactose oligosaccharides, galactomannans and galactolipids.. It carries out the reaction melibiose + H2O = D-galactose + D-glucose. It catalyses the reaction raffinose + H2O = sucrose + D-galactose. The catalysed reaction is stachyose + H2O = raffinose + D-galactose. The enzyme catalyses alpha-D-Gal-(1-&gt;6)-beta-D-Man-(1-&gt;4)-beta-D-Man-(1-&gt;4)-D-Man + H2O = beta-D-Man-(1-&gt;4)-beta-D-Man-(1-&gt;4)-D-Man + D-galactose. It carries out the reaction beta-D-Man-(1-&gt;4)-[alpha-D-Gal-(1-&gt;6)]-beta-D-Man-(1-&gt;4)-beta-D-Man-(1-&gt;4)-D-Man + H2O = beta-D-Man-(1-&gt;4)-beta-D-Man-(1-&gt;4)-beta-D-Man-(1-&gt;4)-D-Man + D-galactose. Its activity is regulated as follows. 1 mM Hg(2+) and Ag(2+) decrease activity by 98% and 96%, respectively. 1 mM Para-chloromercuribenzoic acid (PCMB) completely inhibits enzymatic activity. Hydrolyzes melibiose, raffinose and stachyose in the following decreasing order of reactivity: raffinose, melibiose, stachyose. Acts on both the terminal alpha-galactosyl residue and the side-chain alpha-galactosyl residue of the galactomanno-oligosaccharides. The polypeptide is Alpha-galactosidase (Oryza sativa subsp. japonica (Rice)).